Here is a 421-residue protein sequence, read N- to C-terminus: Serine--tRNA ligase (421 aa).

227 to 229 (TSE) is a binding site for L-serine. ATP is bound by residues 257-259 (RRE) and valine 273. Glutamate 280 contributes to the L-serine binding site. 344–347 (ELTS) provides a ligand contact to ATP. An L-serine-binding site is contributed by threonine 379.

The protein belongs to the class-II aminoacyl-tRNA synthetase family. Type-1 seryl-tRNA synthetase subfamily. In terms of assembly, homodimer. The tRNA molecule binds across the dimer.

It is found in the cytoplasm. It catalyses the reaction tRNA(Ser) + L-serine + ATP = L-seryl-tRNA(Ser) + AMP + diphosphate + H(+). The enzyme catalyses tRNA(Sec) + L-serine + ATP = L-seryl-tRNA(Sec) + AMP + diphosphate + H(+). The protein operates within aminoacyl-tRNA biosynthesis; selenocysteinyl-tRNA(Sec) biosynthesis; L-seryl-tRNA(Sec) from L-serine and tRNA(Sec): step 1/1. Functionally, catalyzes the attachment of serine to tRNA(Ser). Is also able to aminoacylate tRNA(Sec) with serine, to form the misacylated tRNA L-seryl-tRNA(Sec), which will be further converted into selenocysteinyl-tRNA(Sec). The sequence is that of Serine--tRNA ligase from Leifsonia xyli subsp. xyli (strain CTCB07).